The chain runs to 923 residues: Alanine--tRNA ligase (923 aa).

Residues His-611, His-615, Cys-714, and His-718 each coordinate Zn(2+).

It belongs to the class-II aminoacyl-tRNA synthetase family. Zn(2+) serves as cofactor.

Its subcellular location is the cytoplasm. It catalyses the reaction tRNA(Ala) + L-alanine + ATP = L-alanyl-tRNA(Ala) + AMP + diphosphate. Catalyzes the attachment of alanine to tRNA(Ala) in a two-step reaction: alanine is first activated by ATP to form Ala-AMP and then transferred to the acceptor end of tRNA(Ala). Also edits incorrectly charged Ser-tRNA(Ala) and Gly-tRNA(Ala) via its editing domain. This Methanosarcina barkeri (strain Fusaro / DSM 804) protein is Alanine--tRNA ligase.